A 653-amino-acid polypeptide reads, in one-letter code: UvrABC system protein C (653 aa).

The region spanning 44–122 (NAPGVYRMVN…IKRLRPRFNV (79 aa)) is the GIY-YIG domain. The region spanning 232-267 (STVKAEIATAMQEASQALDFERAAIYRDRLAALSHV) is the UVR domain.

It belongs to the UvrC family. Interacts with UvrB in an incision complex.

The protein localises to the cytoplasm. Functionally, the UvrABC repair system catalyzes the recognition and processing of DNA lesions. UvrC both incises the 5' and 3' sides of the lesion. The N-terminal half is responsible for the 3' incision and the C-terminal half is responsible for the 5' incision. This Chelativorans sp. (strain BNC1) protein is UvrABC system protein C.